We begin with the raw amino-acid sequence, 215 residues long: Protein-L-isoaspartate O-methyltransferase (215 aa).

The active site involves S62.

This sequence belongs to the methyltransferase superfamily. L-isoaspartyl/D-aspartyl protein methyltransferase family.

The protein resides in the cytoplasm. It carries out the reaction [protein]-L-isoaspartate + S-adenosyl-L-methionine = [protein]-L-isoaspartate alpha-methyl ester + S-adenosyl-L-homocysteine. Catalyzes the methyl esterification of L-isoaspartyl residues in peptides and proteins that result from spontaneous decomposition of normal L-aspartyl and L-asparaginyl residues. It plays a role in the repair and/or degradation of damaged proteins. The protein is Protein-L-isoaspartate O-methyltransferase of Bradyrhizobium sp. (strain BTAi1 / ATCC BAA-1182).